The sequence spans 132 residues: Small ribosomal subunit protein uS8 (132 aa).

Belongs to the universal ribosomal protein uS8 family. In terms of assembly, part of the 30S ribosomal subunit. Contacts proteins S5 and S12.

Functionally, one of the primary rRNA binding proteins, it binds directly to 16S rRNA central domain where it helps coordinate assembly of the platform of the 30S subunit. The protein is Small ribosomal subunit protein uS8 of Anaeromyxobacter sp. (strain Fw109-5).